Here is a 493-residue protein sequence, read N- to C-terminus: 3-octaprenyl-4-hydroxybenzoate carboxy-lyase (493 aa).

Mn(2+) is bound at residue asparagine 172. Prenylated FMN is bound by residues 175–177 (IYR), 189–191 (RWL), and 194–195 (RG). Residue glutamate 238 participates in Mn(2+) binding. The active-site Proton donor is aspartate 287.

Belongs to the UbiD family. As to quaternary structure, homohexamer. Prenylated FMN is required as a cofactor. The cofactor is Mn(2+).

It is found in the cell membrane. The catalysed reaction is a 4-hydroxy-3-(all-trans-polyprenyl)benzoate + H(+) = a 2-(all-trans-polyprenyl)phenol + CO2. It participates in cofactor biosynthesis; ubiquinone biosynthesis. In terms of biological role, catalyzes the decarboxylation of 3-octaprenyl-4-hydroxy benzoate to 2-octaprenylphenol, an intermediate step in ubiquinone biosynthesis. This chain is 3-octaprenyl-4-hydroxybenzoate carboxy-lyase, found in Shewanella piezotolerans (strain WP3 / JCM 13877).